A 212-amino-acid chain; its full sequence is Proteasome subunit beta (212 aa).

Residues 1–11 (MSQEHQDVKTG) constitute a propeptide, removed in mature form; by autocatalysis. The active-site Nucleophile is the Thr12.

It belongs to the peptidase T1B family. In terms of assembly, the 20S proteasome core is composed of 14 alpha and 14 beta subunits that assemble into four stacked heptameric rings, resulting in a barrel-shaped structure. The two inner rings, each composed of seven catalytic beta subunits, are sandwiched by two outer rings, each composed of seven alpha subunits. The catalytic chamber with the active sites is on the inside of the barrel. Has a gated structure, the ends of the cylinder being occluded by the N-termini of the alpha-subunits. Is capped at one or both ends by the proteasome regulatory ATPase, PAN.

It localises to the cytoplasm. It carries out the reaction Cleavage of peptide bonds with very broad specificity.. The formation of the proteasomal ATPase PAN-20S proteasome complex, via the docking of the C-termini of PAN into the intersubunit pockets in the alpha-rings, triggers opening of the gate for substrate entry. Interconversion between the open-gate and close-gate conformations leads to a dynamic regulation of the 20S proteasome proteolysis activity. In terms of biological role, component of the proteasome core, a large protease complex with broad specificity involved in protein degradation. The sequence is that of Proteasome subunit beta from Methanocorpusculum labreanum (strain ATCC 43576 / DSM 4855 / Z).